Reading from the N-terminus, the 334-residue chain is Ornithine carbamoyltransferase (334 aa).

Carbamoyl phosphate is bound by residues 57 to 60, Gln84, Arg108, and 135 to 138; these read STRT and HPTQ. L-ornithine-binding positions include Asn169, Asp233, and 237 to 238; that span reads SM. Carbamoyl phosphate-binding positions include 275–276 and Arg320; that span reads CL.

It belongs to the aspartate/ornithine carbamoyltransferase superfamily. OTCase family.

It localises to the cytoplasm. The enzyme catalyses carbamoyl phosphate + L-ornithine = L-citrulline + phosphate + H(+). It participates in amino-acid biosynthesis; L-arginine biosynthesis; L-arginine from L-ornithine and carbamoyl phosphate: step 1/3. In terms of biological role, reversibly catalyzes the transfer of the carbamoyl group from carbamoyl phosphate (CP) to the N(epsilon) atom of ornithine (ORN) to produce L-citrulline. The polypeptide is Ornithine carbamoyltransferase (Aeromonas hydrophila subsp. hydrophila (strain ATCC 7966 / DSM 30187 / BCRC 13018 / CCUG 14551 / JCM 1027 / KCTC 2358 / NCIMB 9240 / NCTC 8049)).